We begin with the raw amino-acid sequence, 199 residues long: Large ribosomal subunit protein mL51 (199 aa).

Residues 1-15 constitute a mitochondrion transit peptide; it reads MNSASISRLTSVIRT.

Belongs to the mitochondrion-specific ribosomal protein mL51 family. Component of the mitochondrial ribosome large subunit (39S) which comprises a 16S rRNA and about 50 distinct proteins.

It is found in the mitochondrion. The sequence is that of Large ribosomal subunit protein mL51 (mrpl-51) from Caenorhabditis briggsae.